The chain runs to 297 residues: Formylmethanofuran--tetrahydromethanopterin formyltransferase (297 aa).

Belongs to the FTR family. As to quaternary structure, homotetramer.

The protein localises to the cytoplasm. The enzyme catalyses N-formylmethanofuran + 5,6,7,8-tetrahydromethanopterin + H(+) = N(5)-formyl-5,6,7,8-tetrahydromethanopterin + methanofuran. It participates in one-carbon metabolism; methanogenesis from CO(2); 5,10-methenyl-5,6,7,8-tetrahydromethanopterin from CO(2): step 2/3. Its function is as follows. Catalyzes the reversible transfer of a formyl group from formylmethanofuran (formyl-MFR) to tetrahydromethanopterin (H(4)MPT) to produce 5-formyl tetrahydromethanopterin (5-formyl-H(4)MPT) and methanofuran (MFR). In Methanosarcina barkeri (strain Fusaro / DSM 804), this protein is Formylmethanofuran--tetrahydromethanopterin formyltransferase.